The primary structure comprises 480 residues: Aspartyl/glutamyl-tRNA(Asn/Gln) amidotransferase subunit B (480 aa).

Belongs to the GatB/GatE family. GatB subfamily. As to quaternary structure, heterotrimer of A, B and C subunits.

It carries out the reaction L-glutamyl-tRNA(Gln) + L-glutamine + ATP + H2O = L-glutaminyl-tRNA(Gln) + L-glutamate + ADP + phosphate + H(+). The catalysed reaction is L-aspartyl-tRNA(Asn) + L-glutamine + ATP + H2O = L-asparaginyl-tRNA(Asn) + L-glutamate + ADP + phosphate + 2 H(+). Its function is as follows. Allows the formation of correctly charged Asn-tRNA(Asn) or Gln-tRNA(Gln) through the transamidation of misacylated Asp-tRNA(Asn) or Glu-tRNA(Gln) in organisms which lack either or both of asparaginyl-tRNA or glutaminyl-tRNA synthetases. The reaction takes place in the presence of glutamine and ATP through an activated phospho-Asp-tRNA(Asn) or phospho-Glu-tRNA(Gln). This chain is Aspartyl/glutamyl-tRNA(Asn/Gln) amidotransferase subunit B, found in Saccharophagus degradans (strain 2-40 / ATCC 43961 / DSM 17024).